The following is an 88-amino-acid chain: CRISPR-associated endoribonuclease Cas2 2 (88 aa).

Mg(2+) is bound at residue Asp-8.

Belongs to the CRISPR-associated endoribonuclease Cas2 protein family. As to quaternary structure, homodimer, forms a heterotetramer with a Cas1 homodimer. Mg(2+) is required as a cofactor.

Functionally, CRISPR (clustered regularly interspaced short palindromic repeat), is an adaptive immune system that provides protection against mobile genetic elements (viruses, transposable elements and conjugative plasmids). CRISPR clusters contain sequences complementary to antecedent mobile elements and target invading nucleic acids. CRISPR clusters are transcribed and processed into CRISPR RNA (crRNA). Functions as a ssRNA-specific endoribonuclease. Involved in the integration of spacer DNA into the CRISPR cassette. This chain is CRISPR-associated endoribonuclease Cas2 2 (cas22), found in Saccharolobus solfataricus (strain ATCC 35092 / DSM 1617 / JCM 11322 / P2) (Sulfolobus solfataricus).